The chain runs to 411 residues: Na(+)-translocating NADH-quinone reductase subunit F (411 aa).

Residues 5 to 25 form a helical membrane-spanning segment; the sequence is VILALGIAAFTVIVLVLVAII. The region spanning 36-130 is the 2Fe-2S ferredoxin-type domain; the sequence is GDITIDINDD…NMEVELPEEI (95 aa). [2Fe-2S] cluster contacts are provided by C73, C79, C82, and C114. Residues 133-273 enclose the FAD-binding FR-type domain; it reads VKKWECTVIS…SGPFGEFFAK (141 aa).

Belongs to the NqrF family. Composed of six subunits; NqrA, NqrB, NqrC, NqrD, NqrE and NqrF. [2Fe-2S] cluster is required as a cofactor. Requires FAD as cofactor.

It is found in the cell inner membrane. It catalyses the reaction a ubiquinone + n Na(+)(in) + NADH + H(+) = a ubiquinol + n Na(+)(out) + NAD(+). Functionally, NQR complex catalyzes the reduction of ubiquinone-1 to ubiquinol by two successive reactions, coupled with the transport of Na(+) ions from the cytoplasm to the periplasm. The first step is catalyzed by NqrF, which accepts electrons from NADH and reduces ubiquinone-1 to ubisemiquinone by a one-electron transfer pathway. The sequence is that of Na(+)-translocating NADH-quinone reductase subunit F from Haemophilus influenzae (strain 86-028NP).